The sequence spans 101 residues: Cysteine-rich and transmembrane domain-containing protein B (101 aa).

The tract at residues 1–80 is disordered; that stretch reads MSQQPPAVGV…PQQQQQQKHS (80 aa). Residues 24–43 are compositionally biased toward pro residues; that stretch reads DAYPPPGQPYPQQGYPPPQG. Residues 59–77 are compositionally biased toward low complexity; that stretch reads YPEQGYPQQGYPPQQQQQQ. Residues 78-95 form a helical membrane-spanning segment; it reads KHSPGMLEGCIAALCCYC.

This sequence belongs to the CYSTM1 family.

The protein resides in the membrane. This is Cysteine-rich and transmembrane domain-containing protein B from Arabidopsis thaliana (Mouse-ear cress).